The sequence spans 60 residues: Large ribosomal subunit protein uL30 (60 aa).

This sequence belongs to the universal ribosomal protein uL30 family. As to quaternary structure, part of the 50S ribosomal subunit.

This chain is Large ribosomal subunit protein uL30, found in Carboxydothermus hydrogenoformans (strain ATCC BAA-161 / DSM 6008 / Z-2901).